Here is a 285-residue protein sequence, read N- to C-terminus: Eukaryotic translation initiation factor 3 subunit J (285 aa).

2 disordered regions span residues 1–86 (MSWD…QLDE) and 232–285 (QARL…DDFM). Over residues 22 to 41 (WEDEEDDGPVLESWDVDPEE) the composition is skewed to acidic residues. The stretch at 36 to 81 (DVDPEEEEKKKKEAKLQEAKRKAELKAKEDAEKAKKDAKRKELEQF) forms a coiled coil. Residues 42 to 86 (EEKKKKEAKLQEAKRKAELKAKEDAEKAKKDAKRKELEQFDQLDE) are compositionally biased toward basic and acidic residues. Residues 269-285 (DDMDDGQFDDLDDDDFM) are compositionally biased toward acidic residues.

This sequence belongs to the eIF-3 subunit J family. Component of the eukaryotic translation initiation factor 3 (eIF-3) complex.

The protein localises to the cytoplasm. In terms of biological role, component of the eukaryotic translation initiation factor 3 (eIF-3) complex, which is involved in protein synthesis of a specialized repertoire of mRNAs and, together with other initiation factors, stimulates binding of mRNA and methionyl-tRNAi to the 40S ribosome. The eIF-3 complex specifically targets and initiates translation of a subset of mRNAs involved in cell proliferation. The protein is Eukaryotic translation initiation factor 3 subunit J of Candida albicans (strain SC5314 / ATCC MYA-2876) (Yeast).